A 611-amino-acid chain; its full sequence is Protein halfway (611 aa).

An N-terminal signal peptide occupies residues 1–22; sequence MLAYTHGTWLLLLLLLVAGACA. Disordered regions lie at residues 31 to 64, 90 to 132, and 154 to 185; these read DPAALGEESTPHAHAHPQARHHHHAHPHAPLKED, SLAE…AAPE, and GRAETSEGQGSTVAQSEAQNRGGQGNSQCQCR. Residues 43-59 are compositionally biased toward basic residues; the sequence is AHAHPQARHHHHAHPHA. Polar residues predominate over residues 90–101; sequence SLAETQSMSDPG. A compositionally biased stretch (low complexity) spans 102 to 123; sequence SVTDTTSTSTSHSTSTTSTTSP. Residues 159-183 are compositionally biased toward polar residues; sequence SEGQGSTVAQSEAQNRGGQGNSQCQ. Residues Asn-221, Asn-246, Asn-264, and Asn-269 are each glycosylated (N-linked (GlcNAc...) asparagine). 4 LRR repeats span residues 236–257, 259–280, 283–304, and 313–334; these read SLQSLAVTDGNITRLVNAFPRL, ALKCLNISNNNISEIHSRAVKD, HLEFFGMSNNNLSLVPHRNQNK, and NMRMLCTPLNEIIYTESINFLN. The region spanning 361–416 is the LRRNT domain; sequence ENRKRCVTNCPVIPNYGSCNCTLENIMIIQDNQSKPQCHVDCSNLGLVELPQRLPD. LRR repeat units lie at residues 417–438, 443–464, and 468–489; these read NTFMLNITNNKITSLGDYFHTN, NINRLLADNNQISSIYEFEGTK, and TFQRIYMRNNSLSKIPEYFLNN. Positions 505–554 constitute an LRRCT domain; that stretch reads NKLQCDCNSAKTLQNWLKERSSDIPDYMEIRCRNMPQRVIELQEAKLCQS.

In terms of biological role, has a role in the ecdysone induced cascade; probably indirect control of 'late' ecdysone genes. The chain is Protein halfway from Drosophila melanogaster (Fruit fly).